Here is an 845-residue protein sequence, read N- to C-terminus: Translation initiation factor IF-2 (845 aa).

Disordered stretches follow at residues 45 to 91 (RRKI…SNLS) and 127 to 209 (EESL…TPKV). Polar residues predominate over residues 81–91 (SESSMAKSNLS). Residues 137-149 (TEIHQEEQKEEKN) are compositionally biased toward basic and acidic residues. Polar residues predominate over residues 151–162 (PVQTSPLSSAHS). The span at 179-193 (TEKRKADEIKNDDRH) shows a compositional bias: basic and acidic residues. The region spanning 343 to 512 (PRPPVVTIMG…LLQAELLDLK (170 aa)) is the tr-type G domain. The tract at residues 352–359 (GHVDHGKT) is G1. 352–359 (GHVDHGKT) provides a ligand contact to GTP. The tract at residues 377–381 (GITQH) is G2. Residues 398-401 (DTPG) form a G3 region. GTP-binding positions include 398–402 (DTPGH) and 452–455 (NKID). Residues 452–455 (NKID) form a G4 region. The tract at residues 488 to 490 (SAK) is G5.

It belongs to the TRAFAC class translation factor GTPase superfamily. Classic translation factor GTPase family. IF-2 subfamily.

Its subcellular location is the cytoplasm. One of the essential components for the initiation of protein synthesis. Protects formylmethionyl-tRNA from spontaneous hydrolysis and promotes its binding to the 30S ribosomal subunits. Also involved in the hydrolysis of GTP during the formation of the 70S ribosomal complex. This Bartonella quintana (strain Toulouse) (Rochalimaea quintana) protein is Translation initiation factor IF-2.